The following is a 305-amino-acid chain: MIYSHLSSTSCTITTGCKVNLNLYITGILPNGWHKIDSIFLPLSEPHDELHIEITNHNQGLHLSCNILDIELENNILTKTYTLFTKATHFTPSISIYLKKGIPYGAGLGGGSSDAAALLTWLQKNSPLPLSPSKLLKLAAEIGADVPFFLKNKPCRATGIGEKLEEISLSNLNISGNTLFIICPNLKISTPYAYKMWDDYNKKQIATSSRYNNNLTKKYSWDRSSPSTHLSDYLWMKNDFEPVIFSEYTELSVFKEQLLQFGARAAVLSGSGSSIYGLFKEYNQTSIMTEFYKKKNILTFSQLLQ.

Residue Lys-18 is part of the active site. 103-113 provides a ligand contact to ATP; it reads PYGAGLGGGSS. The active site involves Asp-145.

This sequence belongs to the GHMP kinase family. IspE subfamily.

It carries out the reaction 4-CDP-2-C-methyl-D-erythritol + ATP = 4-CDP-2-C-methyl-D-erythritol 2-phosphate + ADP + H(+). It functions in the pathway isoprenoid biosynthesis; isopentenyl diphosphate biosynthesis via DXP pathway; isopentenyl diphosphate from 1-deoxy-D-xylulose 5-phosphate: step 3/6. Functionally, catalyzes the phosphorylation of the position 2 hydroxy group of 4-diphosphocytidyl-2C-methyl-D-erythritol. In Lawsonia intracellularis (strain PHE/MN1-00), this protein is 4-diphosphocytidyl-2-C-methyl-D-erythritol kinase.